The sequence spans 460 residues: Cysteine--tRNA ligase (460 aa).

Cys28 contacts Zn(2+). The 'HIGH' region signature appears at 30 to 40; it reads MTVYDYCHLGH. Zn(2+) contacts are provided by Cys209, His234, and Glu238. The 'KMSKS' region motif lies at 266–270; sequence KMSKS. Position 269 (Lys269) interacts with ATP.

Belongs to the class-I aminoacyl-tRNA synthetase family. In terms of assembly, monomer. The cofactor is Zn(2+).

Its subcellular location is the cytoplasm. The catalysed reaction is tRNA(Cys) + L-cysteine + ATP = L-cysteinyl-tRNA(Cys) + AMP + diphosphate. In Pseudomonas savastanoi pv. phaseolicola (strain 1448A / Race 6) (Pseudomonas syringae pv. phaseolicola (strain 1448A / Race 6)), this protein is Cysteine--tRNA ligase.